Here is a 283-residue protein sequence, read N- to C-terminus: Thymidylate synthase (283 aa).

Arginine 22 serves as a coordination point for dUMP. Catalysis depends on cysteine 160, which acts as the Nucleophile. DUMP is bound by residues 180–183 (RSCD), asparagine 191, and 221–223 (HIY). Aspartate 183 contacts (6R)-5,10-methylene-5,6,7,8-tetrahydrofolate. Serine 282 is a (6R)-5,10-methylene-5,6,7,8-tetrahydrofolate binding site.

The protein belongs to the thymidylate synthase family. Bacterial-type ThyA subfamily. In terms of assembly, homodimer.

The protein localises to the cytoplasm. It catalyses the reaction dUMP + (6R)-5,10-methylene-5,6,7,8-tetrahydrofolate = 7,8-dihydrofolate + dTMP. The protein operates within pyrimidine metabolism; dTTP biosynthesis. Its function is as follows. Catalyzes the reductive methylation of 2'-deoxyuridine-5'-monophosphate (dUMP) to 2'-deoxythymidine-5'-monophosphate (dTMP) while utilizing 5,10-methylenetetrahydrofolate (mTHF) as the methyl donor and reductant in the reaction, yielding dihydrofolate (DHF) as a by-product. This enzymatic reaction provides an intracellular de novo source of dTMP, an essential precursor for DNA biosynthesis. The protein is Thymidylate synthase of Vibrio parahaemolyticus serotype O3:K6 (strain RIMD 2210633).